We begin with the raw amino-acid sequence, 195 residues long: Flagellar transcriptional regulator FlhC (195 aa).

4 residues coordinate Zn(2+): C137, C140, C157, and C160. Residues 165-195 (RAGSARRKTTTRKAVAPTHKTTAASRKAVVA) are disordered.

Belongs to the FlhC family. In terms of assembly, heterohexamer composed of two FlhC and four FlhD subunits. Each FlhC binds a FlhD dimer, forming a heterotrimer, and a hexamer assembles by dimerization of two heterotrimers. Requires Zn(2+) as cofactor.

It is found in the cytoplasm. Its function is as follows. Functions in complex with FlhD as a master transcriptional regulator that regulates transcription of several flagellar and non-flagellar operons by binding to their promoter region. Activates expression of class 2 flagellar genes, including fliA, which is a flagellum-specific sigma factor that turns on the class 3 genes. Also regulates genes whose products function in a variety of physiological pathways. The sequence is that of Flagellar transcriptional regulator FlhC from Thauera aminoaromatica.